Here is a 246-residue protein sequence, read N- to C-terminus: Apolipoprotein L domain-containing protein 1 (246 aa).

The next 2 membrane-spanning stretches (helical) occupy residues 50 to 72 (SLAA…IVGL) and 89 to 109 (GLGV…SLIF). Residues 193–220 (LKAKIQKLSESLESCTGALDELSEQLES) are a coiled coil.

Belongs to the apolipoprotein L family. As to expression, present at low levels in brain vascular cells (at protein level).

The protein resides in the cell membrane. It localises to the cell junction. It is found in the cytoplasmic vesicle. The protein localises to the secretory vesicle. Its function is as follows. Is a modulator of endothelial barrier permeability, required for proper organization of endothelial cell-cell junctions and cytoskeleton. It also plays a role in the modulation of secretory autophagy. May affect blood-brain barrier permeability. This Rattus norvegicus (Rat) protein is Apolipoprotein L domain-containing protein 1 (Apold1).